Reading from the N-terminus, the 159-residue chain is Phosphopantetheine adenylyltransferase (159 aa).

Thr-10 contributes to the substrate binding site. ATP-binding positions include 10–11 and His-18; that span reads TF. Residues Lys-42, Leu-73, and Arg-87 each contribute to the substrate site. ATP-binding positions include 88–90, Glu-98, and 123–129; these read GLR and YSYVSGT.

Belongs to the bacterial CoaD family. In terms of assembly, homohexamer. Mg(2+) serves as cofactor.

The protein localises to the cytoplasm. It carries out the reaction (R)-4'-phosphopantetheine + ATP + H(+) = 3'-dephospho-CoA + diphosphate. It participates in cofactor biosynthesis; coenzyme A biosynthesis; CoA from (R)-pantothenate: step 4/5. In terms of biological role, reversibly transfers an adenylyl group from ATP to 4'-phosphopantetheine, yielding dephospho-CoA (dPCoA) and pyrophosphate. In Coxiella burnetii (strain CbuK_Q154) (Coxiella burnetii (strain Q154)), this protein is Phosphopantetheine adenylyltransferase.